A 369-amino-acid polypeptide reads, in one-letter code: Cystathionine gamma-synthase (369 aa).

Position 200 is an N6-(pyridoxal phosphate)lysine (K200).

This sequence belongs to the trans-sulfuration enzymes family. As to quaternary structure, homotetramer. Requires pyridoxal 5'-phosphate as cofactor.

It localises to the cytoplasm. It catalyses the reaction O-succinyl-L-homoserine + L-cysteine = L,L-cystathionine + succinate + H(+). Its function is as follows. Catalyzes the formation of L-cystathionine from O-succinyl-L-homoserine (OSHS) and L-cysteine, via a gamma-replacement reaction. In the absence of thiol, catalyzes gamma-elimination to form 2-oxobutanoate, succinate and ammonia. The sequence is that of Cystathionine gamma-synthase (metB) from Haemophilus influenzae (strain ATCC 51907 / DSM 11121 / KW20 / Rd).